A 212-amino-acid polypeptide reads, in one-letter code: Thymidylate kinase (212 aa).

11 to 18 (GPEGAGKS) contributes to the ATP binding site.

The protein belongs to the thymidylate kinase family.

The catalysed reaction is dTMP + ATP = dTDP + ADP. Functionally, phosphorylation of dTMP to form dTDP in both de novo and salvage pathways of dTTP synthesis. In Streptococcus sanguinis (strain SK36), this protein is Thymidylate kinase.